We begin with the raw amino-acid sequence, 524 residues long: MDLTLARTMEILRPLGLADGLRARGVPSTYPFTVRFSSGLGMKHSLSEWKLPSADQLRERIMSQNDGTMPLEPWLRVSGDVMEAFLKEKCEESHLVTLRFGWSVTQVIESATEVETRVRNPHTGGEKVIRSQYAVGCDGASSLVRKNMGIALDGGPIHSSVVLIHFKSRDLTRLHRQGRFWHTFFLLDPTISGDSVGGAIIAQDEVDTWTVHDFRAPGSKQSISCAEETIYRVLGAMGGPYPITIDEIIQQSTWTPSIALAKSYTGPLHRVFLAGDACHQTIPSGGYGMNMGIADVFDLGWKLAAMIQGWGGAQLVLSYEQERRPVAELMQHWGKVHAGKLMGLASAVTLNATIIDASDARGEEMRQKIHEYVQSNDAHNQCFGVEHGHQHHSDITVTSASSHPPFDPRSYTPTTHPGFRAPHVFLNDGSAIFDKFGKTLTLVEFIDAMPGPSSGGSFFRDTADEHHIPLRIASLVGEANAQQIWGARLVLVRPDHFVSWCGNDVGSKDEAKRVLLQAAGHICR.

Positions 48 and 145 each coordinate FAD.

It belongs to the paxM FAD-dependent monooxygenase family.

It functions in the pathway secondary metabolite biosynthesis. Functionally, FAD-dependent monooxygenase; part of the gene cluster that mediates the biosynthesis of oxopyrrolidines, polyketide-amino acid hybrid compounds with feature structures of tetramic acid. Does not seem to play a role in oxopyrrolidines A and B biosynthesis. May be involved in further modifications of these oxopyrrolidines. In Penicillium oxalicum (strain 114-2 / CGMCC 5302) (Penicillium decumbens), this protein is FAD-dependent monooxygenase opdD.